Here is an 823-residue protein sequence, read N- to C-terminus: Apoptosis-resistant E3 ubiquitin protein ligase 1 (823 aa).

The Filamin repeat unit spans residues 52 to 158 (GNYLDPRSCK…VAYSPYYKIF (107 aa)). A disordered region spans residues 315 to 345 (PPMHMTSSQRRPSTAVDEEDEDSPSECHTPE). The interaction with SOCS2 stretch occupies residues 483–789 (SISDWSKNFE…THSTLPTAHT (307 aa)). The 341-residue stretch at 483–823 (SISDWSKNFE…SEGCEGFGML (341 aa)) folds into the HECT domain. The active-site Glycyl thioester intermediate is the Cys-790.

In terms of assembly, interacts with SOCS2. Interacts (via HECT domain) with HTRA2, DIABLO/SMAC and SEPTIN4; in the cytoplasm following induction of apoptosis. In terms of processing, autoubiquitinated in vitro in the presence of E2 enzyme UBE2D1/UBCH5A.

The catalysed reaction is S-ubiquitinyl-[E2 ubiquitin-conjugating enzyme]-L-cysteine + [acceptor protein]-L-lysine = [E2 ubiquitin-conjugating enzyme]-L-cysteine + N(6)-ubiquitinyl-[acceptor protein]-L-lysine.. It functions in the pathway protein modification; protein ubiquitination. Functionally, E3 ubiquitin-protein ligase that catalyzes 'Lys-11'- or 'Lys-33'-linked polyubiquitin chains, with some preference for 'Lys-33' linkages. E3 ubiquitin-protein ligases accept ubiquitin from an E2 ubiquitin-conjugating enzyme in the form of a thioester and then directly transfers the ubiquitin to targeted substrates. Ubiquitinates SEPTIN4, DIABLO/SMAC and HTRA2 in vitro. Modulates pulmonary inflammation by targeting SOCS2 for ubiquitination and subsequent degradation by the proteasome. This is Apoptosis-resistant E3 ubiquitin protein ligase 1 from Homo sapiens (Human).